The chain runs to 373 residues: ADP-forming sulfoacetate-CoA ligase subunit SauC (373 aa).

The region spanning 9–249 (KEAFREKGLP…YLQFNGDIAL (241 aa)) is the ATP-grasp domain. An ATP-binding site is contributed by 35-97 (FAEVGFPCVL…EEAVDIDREI (63 aa)). Residues glutamate 186 and asparagine 188 each coordinate Mg(2+).

This sequence belongs to the succinate/malate CoA ligase beta subunit family. In terms of assembly, forms a complex with SauD. Requires Mg(2+) as cofactor.

It catalyses the reaction sulfoacetate + ATP + CoA = sulfoacetyl-CoA + ADP + phosphate. Involved in the degradation of sulfoacetate. Catalyzes the CoA- and ATP-dependent conversion of sulfoacetate to sulfoacetyl-CoA and ADP. Cannot use other sulfonic and carboxylic acids, and shows only residual activity with 3-sulfopropanoate and malonic acid. The chain is ADP-forming sulfoacetate-CoA ligase subunit SauC from Bilophila wadsworthia (strain 3_1_6).